Here is a 173-residue protein sequence, read N- to C-terminus: Protein Rv3753c (173 aa).

The protein is Protein Rv3753c of Mycobacterium tuberculosis (strain ATCC 25618 / H37Rv).